We begin with the raw amino-acid sequence, 295 residues long: uncharacterized protein (295 aa).

In terms of domain architecture, Resolvase/invertase-type recombinase catalytic spans 151 to 290 (RTAVCARLSS…RAVAAAARAG (140 aa)). Serine 159 acts as the O-(5'-phospho-DNA)-serine intermediate in catalysis.

This is an uncharacterized protein from Mycobacterium bovis (strain ATCC BAA-935 / AF2122/97).